Reading from the N-terminus, the 272-residue chain is Centromere protein V-like protein 1 (272 aa).

Positions 1 to 17 (MGRVRNRATAQRRRRKR) are enriched in basic residues. Disordered stretches follow at residues 1–23 (MGRV…DPPA) and 65–95 (RRVR…KDLD). Positions 79 to 90 (APTPDPPGPAPS) are enriched in pro residues. The region spanning 133–246 (HTGGCHCGAV…EEVGGGDPGE (114 aa)) is the CENP-V/GFA domain. The Zn(2+) site is built by C137, C139, C157, C159, C162, C201, and C204. Residues 240–272 (GGGDPGEEAAEEHKAIHKTSSQSAPACPREQEQ) are disordered.

Belongs to the Gfa family. Requires Zn(2+) as cofactor.

This Homo sapiens (Human) protein is Centromere protein V-like protein 1.